The primary structure comprises 802 residues: Phenylalanine--tRNA ligase beta subunit (802 aa).

In terms of domain architecture, tRNA-binding spans 38–149; it reads KSSLKPFVIA…ADAPVGTSFA (112 aa). The B5 domain occupies 399 to 474; it reads HKPKIVSFPI…RIHGVDNIAP (76 aa). 4 residues coordinate Mg(2+): D452, D458, E461, and E462. The FDX-ACB domain occupies 708-801; it reads SAFQAVKRDF…VGKQTGGVLR (94 aa).

It belongs to the phenylalanyl-tRNA synthetase beta subunit family. Type 1 subfamily. In terms of assembly, tetramer of two alpha and two beta subunits. It depends on Mg(2+) as a cofactor.

It is found in the cytoplasm. It carries out the reaction tRNA(Phe) + L-phenylalanine + ATP = L-phenylalanyl-tRNA(Phe) + AMP + diphosphate + H(+). The chain is Phenylalanine--tRNA ligase beta subunit from Mesorhizobium japonicum (strain LMG 29417 / CECT 9101 / MAFF 303099) (Mesorhizobium loti (strain MAFF 303099)).